The primary structure comprises 29 residues: uncharacterized protein (29 aa).

This is an uncharacterized protein from Saccharomyces cerevisiae (strain ATCC 204508 / S288c) (Baker's yeast).